A 246-amino-acid polypeptide reads, in one-letter code: Probable transcriptional regulatory protein CA_C2295 (246 aa).

This sequence belongs to the TACO1 family.

It localises to the cytoplasm. The polypeptide is Probable transcriptional regulatory protein CA_C2295 (Clostridium acetobutylicum (strain ATCC 824 / DSM 792 / JCM 1419 / IAM 19013 / LMG 5710 / NBRC 13948 / NRRL B-527 / VKM B-1787 / 2291 / W)).